Reading from the N-terminus, the 252-residue chain is Imidazole glycerol phosphate synthase subunit HisF (252 aa).

Catalysis depends on residues Asp-11 and Asp-130.

The protein belongs to the HisA/HisF family. Heterodimer of HisH and HisF.

It localises to the cytoplasm. It catalyses the reaction 5-[(5-phospho-1-deoxy-D-ribulos-1-ylimino)methylamino]-1-(5-phospho-beta-D-ribosyl)imidazole-4-carboxamide + L-glutamine = D-erythro-1-(imidazol-4-yl)glycerol 3-phosphate + 5-amino-1-(5-phospho-beta-D-ribosyl)imidazole-4-carboxamide + L-glutamate + H(+). It participates in amino-acid biosynthesis; L-histidine biosynthesis; L-histidine from 5-phospho-alpha-D-ribose 1-diphosphate: step 5/9. In terms of biological role, IGPS catalyzes the conversion of PRFAR and glutamine to IGP, AICAR and glutamate. The HisF subunit catalyzes the cyclization activity that produces IGP and AICAR from PRFAR using the ammonia provided by the HisH subunit. This chain is Imidazole glycerol phosphate synthase subunit HisF, found in Staphylococcus aureus (strain MRSA252).